We begin with the raw amino-acid sequence, 338 residues long: Glycerol-3-phosphate dehydrogenase [NAD(P)+] (338 aa).

NADPH is bound by residues Ser-13, Trp-14, and Lys-108. The sn-glycerol 3-phosphate site is built by Lys-108, Gly-139, and Ser-141. Residue Ala-143 coordinates NADPH. Residues Lys-194, Asp-247, Ser-257, Arg-258, and Asn-259 each contribute to the sn-glycerol 3-phosphate site. The Proton acceptor role is filled by Lys-194. Arg-258 provides a ligand contact to NADPH. Positions 282 and 284 each coordinate NADPH.

It belongs to the NAD-dependent glycerol-3-phosphate dehydrogenase family.

It localises to the cytoplasm. It catalyses the reaction sn-glycerol 3-phosphate + NAD(+) = dihydroxyacetone phosphate + NADH + H(+). The catalysed reaction is sn-glycerol 3-phosphate + NADP(+) = dihydroxyacetone phosphate + NADPH + H(+). It functions in the pathway membrane lipid metabolism; glycerophospholipid metabolism. In terms of biological role, catalyzes the reduction of the glycolytic intermediate dihydroxyacetone phosphate (DHAP) to sn-glycerol 3-phosphate (G3P), the key precursor for phospholipid synthesis. In Streptococcus pyogenes serotype M12 (strain MGAS9429), this protein is Glycerol-3-phosphate dehydrogenase [NAD(P)+].